The following is a 218-amino-acid chain: Small ribosomal subunit protein uS3 (218 aa).

Residues 40–109 (IRKIINTEYS…DVSINIREVK (70 aa)) enclose the KH type-2 domain.

Belongs to the universal ribosomal protein uS3 family. In terms of assembly, part of the 30S ribosomal subunit. Forms a tight complex with proteins S10 and S14.

In terms of biological role, binds the lower part of the 30S subunit head. Binds mRNA in the 70S ribosome, positioning it for translation. The protein is Small ribosomal subunit protein uS3 of Orientia tsutsugamushi (strain Boryong) (Rickettsia tsutsugamushi).